Reading from the N-terminus, the 638-residue chain is Chaperone protein DnaK (638 aa).

Residue Thr-198 is modified to Phosphothreonine; by autocatalysis. A disordered region spans residues 602–638 (QAKSQAQGGEEAQAKDAGQSNDDVVDAEFEEVKDDKK). Residues 624 to 638 (DVVDAEFEEVKDDKK) show a composition bias toward acidic residues.

The protein belongs to the heat shock protein 70 family.

Acts as a chaperone. The sequence is that of Chaperone protein DnaK from Shewanella denitrificans (strain OS217 / ATCC BAA-1090 / DSM 15013).